A 260-amino-acid chain; its full sequence is Vesicle-associated membrane protein 7B (260 aa).

Residues 1–189 (MPIIYSLVAR…KCAMWWKNVK (189 aa)) are Cytoplasmic-facing. Positions 7–110 (LVARGSSVLA…GMNSDFSRTL (104 aa)) constitute a Longin domain. In terms of domain architecture, v-SNARE coiled-coil homology spans 125–186 (TMSRTMAEID…KQLKCAMWWK (62 aa)). The helical; Anchor for type IV membrane protein transmembrane segment at 190–210 (LMLVLGAIVLIIIFIIVMSYC) threads the bilayer. Residues 211–260 (DGFRSGSKCRSSPSSNSTPTPTPTETPTPTPTPTSTPTPSQLLETLLNQF) are Vesicular-facing. Positions 215–250 (SGSKCRSSPSSNSTPTPTPTETPTPTPTPTSTPTPS) are disordered. Residues 230–246 (TPTPTETPTPTPTPTST) show a composition bias toward pro residues.

Belongs to the synaptobrevin family.

The protein resides in the cytoplasmic vesicle. It localises to the secretory vesicle membrane. The protein localises to the golgi apparatus. It is found in the trans-Golgi network membrane. Its subcellular location is the late endosome membrane. The protein resides in the lysosome membrane. It localises to the endoplasmic reticulum membrane. The protein localises to the phagosome membrane. Involved in the targeting and/or fusion of transport vesicles to their target membrane during transport of proteins from the early endosome to the lysosome. Required for heterotypic fusion of late endosomes with lysosomes and homotypic lysosomal fusion. In Dictyostelium discoideum (Social amoeba), this protein is Vesicle-associated membrane protein 7B.